The primary structure comprises 517 residues: Gamma-1-syntrophin (517 aa).

Residues 57–140 (TVTIRRQTVG…EVTLTVSFLK (84 aa)) form the PDZ domain. The 108-residue stretch at 283–390 (QIVYMGWCEA…WERAFQTATF (108 aa)) folds into the PH domain.

This sequence belongs to the syntrophin family. As to quaternary structure, interacts with the dystrophin protein DMD and related proteins DTNA and DTNB. Interacts with DGKZ.

It is found in the cytoplasm. It localises to the cytoskeleton. The protein localises to the nucleus. Functionally, adapter protein that binds to and probably organizes the subcellular localization of a variety of proteins. May link various receptors to the actin cytoskeleton and the dystrophin glycoprotein complex. May participate in regulating the subcellular location of diacylglycerol kinase-zeta to ensure that diacylglycerol is rapidly inactivated following receptor activation. This Mus musculus (Mouse) protein is Gamma-1-syntrophin (Sntg1).